The sequence spans 181 residues: MKLLVLLLCLGLTLVCVHAEEASSMERNFNVEKINGEWYTIMLATDKREKIEEHGSMRVFVEYIHVLENSLALKFHIIINEECSEIFLVADKTEKAGEYSVTYDGSNTFTILKTDYDNYIMIHLINKKDGETFQLMELYGREPDLSSDIKEKFAQLSEEHGIVRENIIDLTNANRCLEARE.

Positions 1 to 19 are cleaved as a signal peptide; sequence MKLLVLLLCLGLTLVCVHA. A disulfide bond links Cys-83 and Cys-176.

It belongs to the calycin superfamily. Lipocalin family. As to expression, detected in urine of males but absent from female urine (at protein level).

Its subcellular location is the secreted. In terms of biological role, male pheromone which stimulates female sexual attraction to male urinary scent and promotes a strong learned attraction to the airborne urinary odor of an individual male. Promotes spatial learning by rapidly conditioning preference for its remembered location among females and competitor males so that animals prefer to spend time in the site even when scent is absent. In addition to promoting a rapid attraction response, also elicits ultrasonic vocalizations and urinary scent marking in females which do not occur immediately after exposure. Stimulates hippocampal neurogenesis and cell proliferation in the subventricular zone in females. Promotes male aggressive behavior. Response to Mup20 is mediated by a neural circuit extending from the accessory olfactory bulb to a subset of nitric oxidase synthase-expressing neurons in the medial amygdala. As well as acting as a pheromone itself, binds most of the male pheromone, 2-sec-butyl-4,5-dihydrothiazole, in urine and is responsible for its slow release from scent marks. In Mus musculus (Mouse), this protein is Major urinary protein 20.